The chain runs to 906 residues: MLSILKKLFGTANDRTVKKLFSEITKINSLEHAIQKLSDEELKNKTVEFKEKLKNGATLDDIVYEAFAVVREAARRVCGMRHFDVQLIGGLILHRGMITEMRTGEGKTLVATLPAYLNALTGKGVHVVTVNDYLARRDSAAMGKIYNFLGLSVGCIVAGMPDEAKRAAYNADITHATNNELGFDYLRDNMKYSLQERVLRPFNFAIIDEVDSILIDEARTPLVISGPVNDNSELYGKIDKIVRLLNINDFEKDEKLKTINLTETGITHIESLLSKEGIIKPDTGLYDFENLTLVHYVNQALRAHNMFTVDVDYLVREGKVMIIDEFTGRVMEGRRYSEGLHQALEAKENVKIQNENQTLASVTFQNYFRNYPKLSGMTGTAMTEAPELKDIYNLDVVAVPTHNKVTRLDLDDEIYGSKKEKYDAILKLIKDCYDRGQPILVGTISIEKSEELSSVLNAEKIPHKVLNAKFHEQEACIIAQAGRFKAVTIATNMAGRGTDIMLGGNPEMLIEHLDKDHNYAAKIDEIKAQIAEEKKQVIEAGGLFVIGTERHESRRIDNQLRGRSGRQGDPGKTKFFLSLDDDLMRIFASDRISGVLRTLGLKDGEAIQHPMISRSLEKAQQKVEGYNYEMRKNLLRFDDVMNDQRKIIYEQRTEIIKSKDSYGFLNSTTEELAKKIVLAFMPVGSYREDWDIENLSVELHRVFAIKFDHNLVSKSDVTEEEITKIVIQMAHDVYKSKEEAYSSELMHNAVKYILLTTLDQVWKDHLYSLDHLRQGISLRAYAQKDPLSEYKREAFNLFEQMLNNLKELFIQAVYHFHIDLKHVQKEDVSLERKKLQNNMRESREDPAFSKYNAGSSLETHLKPVVSRIDPKDRNPDDPTSWGRVSRNELCPCSSGKKYKYCHGAHE.

ATP-binding positions include Q86, G104–T108, and D499. The interval P863–S885 is disordered. Residues C890, C892, C901, and H902 each coordinate Zn(2+).

It belongs to the SecA family. Monomer and homodimer. Part of the essential Sec protein translocation apparatus which comprises SecA, SecYEG and auxiliary proteins SecDF-YajC and YidC. It depends on Zn(2+) as a cofactor.

It is found in the cell inner membrane. It localises to the cytoplasm. The catalysed reaction is ATP + H2O + cellular proteinSide 1 = ADP + phosphate + cellular proteinSide 2.. In terms of biological role, part of the Sec protein translocase complex. Interacts with the SecYEG preprotein conducting channel. Has a central role in coupling the hydrolysis of ATP to the transfer of proteins into and across the cell membrane, serving both as a receptor for the preprotein-SecB complex and as an ATP-driven molecular motor driving the stepwise translocation of polypeptide chains across the membrane. The chain is Protein translocase subunit SecA from Rickettsia akari (strain Hartford).